Here is a 359-residue protein sequence, read N- to C-terminus: Type-1 angiotensin II receptor (359 aa).

Topologically, residues 1–25 (MILNSSTEDSIKRIQDDCPKAGRHN) are extracellular. Asparagine 4 is a glycosylation site (N-linked (GlcNAc...) asparagine). Residues glutamine 15 and aspartate 17 each contribute to the angiotensin II site. 2 cysteine pairs are disulfide-bonded: cysteine 18-cysteine 274 and cysteine 101-cysteine 180. Residues 26–55 (YIFVMIPTLYSIIFVVGIFGNSLVVIVIYF) form a helical membrane-spanning segment. At 56–61 (YMKLKT) the chain is on the cytoplasmic side. The chain crosses the membrane as a helical span at residues 62–89 (VASVFLLNLALADLCFLLTLPLWAVYTA). Residues 90 to 98 (MEYRWPFGN) lie on the Extracellular side of the membrane. A helical transmembrane segment spans residues 99 to 125 (YLCKIASASVSFNLYASVFLLTCLSID). Topologically, residues 126 to 141 (RYLAIVHPMKSRLRRT) are cytoplasmic. A helical membrane pass occupies residues 142–165 (MLVAKVTCIIIWLLAGLASLPTII). Topologically, residues 166–190 (HRNVFFIENTNITVCAFHYESQNST) are extracellular. Arginine 167 lines the angiotensin II pocket. N-linked (GlcNAc...) asparagine glycosylation occurs at asparagine 176. Phenylalanine 182, histidine 183, and tyrosine 184 together coordinate angiotensin II. N-linked (GlcNAc...) asparagine glycosylation is present at asparagine 188. Residues 191-216 (LPVGLGLTKNILGFLFPFLIILTSYT) form a helical membrane-spanning segment. Residue lysine 199 coordinates angiotensin II. Topologically, residues 217–239 (LIWKALKKAYEIQKNKPRNDDIF) are cytoplasmic. A helical membrane pass occupies residues 240 to 268 (KIIMAIVLFFFFSWVPHQIFTFLDVLIQL). Over 269-278 (GIIHDCKIAD) the chain is Extracellular. Residues 279–304 (IVDTAMPITICLAYFNNCLNPLFYGF) form a helical membrane-spanning segment. The Cytoplasmic portion of the chain corresponds to 305 to 359 (LGKKFKKYFLQLLKYIPPKAKSHSSLSTKMSTLSYRPSENGSSSTKKSAPCTEVE). Positions 326-359 (SHSSLSTKMSTLSYRPSENGSSSTKKSAPCTEVE) are disordered. Positions 327 to 351 (HSSLSTKMSTLSYRPSENGSSSTKK) are enriched in polar residues. The S-palmitoyl cysteine moiety is linked to residue cysteine 355.

This sequence belongs to the G-protein coupled receptor 1 family. In terms of assembly, interacts with MAS1. Interacts with ARRB1. Interacts with FLNA (via filamin repeat 21); increases PKA-mediated phosphorylation of FLNA. C-terminal Ser or Thr residues may be phosphorylated.

Its subcellular location is the cell membrane. Functionally, receptor for angiotensin II, a vasoconstricting peptide, which acts as a key regulator of blood pressure and sodium retention by the kidney. The activated receptor in turn couples to G-alpha proteins G(q) (GNAQ, GNA11, GNA14 or GNA15) and thus activates phospholipase C and increases the cytosolic Ca(2+) concentrations, which in turn triggers cellular responses such as stimulation of protein kinase C. The sequence is that of Type-1 angiotensin II receptor (AGTR1) from Sus scrofa (Pig).